Consider the following 188-residue polypeptide: UPF0461 protein C5orf24 homolog (188 aa).

The residue at position 37 (Ser-37) is a Phosphoserine. Residue Lys-75 forms a Glycyl lysine isopeptide (Lys-Gly) (interchain with G-Cter in SUMO2) linkage. The segment at 79–142 (KKKKNLNRSG…GYKVSPGRPP (64 aa)) is disordered. Residues 80–92 (KKKNLNRSGKRGR) show a composition bias toward basic residues. Residues 94–107 (SGTTKSAGYRTSTG) are compositionally biased toward polar residues. Phosphoserine occurs at positions 121 and 180. Lys-184 is covalently cross-linked (Glycyl lysine isopeptide (Lys-Gly) (interchain with G-Cter in SUMO2)).

The protein belongs to the UPF0461 family.

The chain is UPF0461 protein C5orf24 homolog from Bos taurus (Bovine).